The primary structure comprises 713 residues: Polyribonucleotide nucleotidyltransferase (713 aa).

2 residues coordinate Mg(2+): Asp-498 and Asp-504. One can recognise a KH domain in the interval 565 to 631; it reads PRILSLKVPV…RIEDLTREAK (67 aa). The S1 motif domain occupies 633–701; sequence GEIYEGTVTR…ERGKIDLIRP (69 aa).

It belongs to the polyribonucleotide nucleotidyltransferase family. Mg(2+) serves as cofactor.

Its subcellular location is the cytoplasm. The catalysed reaction is RNA(n+1) + phosphate = RNA(n) + a ribonucleoside 5'-diphosphate. Involved in mRNA degradation. Catalyzes the phosphorolysis of single-stranded polyribonucleotides processively in the 3'- to 5'-direction. The sequence is that of Polyribonucleotide nucleotidyltransferase from Thermus thermophilus.